Here is a 388-residue protein sequence, read N- to C-terminus: Chorismate synthase (388 aa).

NADP(+) contacts are provided by Arg39 and Arg45. Residues 130 to 132 (RSS), 251 to 252 (NA), Gly296, 311 to 315 (KPIPT), and Arg337 each bind FMN.

The protein belongs to the chorismate synthase family. In terms of assembly, homotetramer. FMNH2 is required as a cofactor.

The catalysed reaction is 5-O-(1-carboxyvinyl)-3-phosphoshikimate = chorismate + phosphate. The protein operates within metabolic intermediate biosynthesis; chorismate biosynthesis; chorismate from D-erythrose 4-phosphate and phosphoenolpyruvate: step 7/7. Functionally, catalyzes the anti-1,4-elimination of the C-3 phosphate and the C-6 proR hydrogen from 5-enolpyruvylshikimate-3-phosphate (EPSP) to yield chorismate, which is the branch point compound that serves as the starting substrate for the three terminal pathways of aromatic amino acid biosynthesis. This reaction introduces a second double bond into the aromatic ring system. The chain is Chorismate synthase from Streptococcus pyogenes serotype M6 (strain ATCC BAA-946 / MGAS10394).